The primary structure comprises 199 residues: Outer-membrane lipoprotein LolB (199 aa).

Residues 1-28 (MAAAGSLCQTAWRVRGWLAAGLCALLAG) form the signal peptide. Residue Cys29 is the site of N-palmitoyl cysteine attachment. Cys29 is lipidated: S-diacylglycerol cysteine.

The protein belongs to the LolB family. In terms of assembly, monomer.

It localises to the cell outer membrane. Functionally, plays a critical role in the incorporation of lipoproteins in the outer membrane after they are released by the LolA protein. The polypeptide is Outer-membrane lipoprotein LolB (Bordetella petrii (strain ATCC BAA-461 / DSM 12804 / CCUG 43448)).